The chain runs to 219 residues: Guanylate kinase (219 aa).

The 180-residue stretch at 15-194 folds into the Guanylate kinase-like domain; that stretch reads GLMFVLSSPS…AFAEVHSILK (180 aa). 22 to 29 contacts ATP; that stretch reads SPSGAGKT.

It belongs to the guanylate kinase family.

The protein localises to the cytoplasm. It carries out the reaction GMP + ATP = GDP + ADP. Essential for recycling GMP and indirectly, cGMP. The chain is Guanylate kinase from Rhodopseudomonas palustris (strain BisB18).